Reading from the N-terminus, the 417-residue chain is Phosphoglycerate kinase, cytosolic (417 aa).

The (2R)-3-phosphoglycerate site is built by Val-23, Asp-24, Phe-25, Asn-26, Arg-39, Ser-61, His-62, Gly-64, Arg-65, Arg-132, His-168, and Arg-169. Residues Gly-214 and Ala-215 each contribute to the ADP site. Gly-214 serves as a coordination point for CDP. The AMP site is built by Ala-215 and Lys-216. Ala-215 lines the ATP pocket. Ala-215 serves as a coordination point for Mg(2+). A (2R)-3-phosphoglycerate-binding site is contributed by Lys-216. Asp-219 serves as a coordination point for CDP. Asp-219 contributes to the Mg(2+) binding site. Residues Lys-220 and Gly-238 each coordinate ADP. Residue Lys-220 participates in AMP binding. Lys-220 contributes to the ATP binding site. Position 238 (Gly-238) interacts with CDP. AMP is bound by residues Ala-239 and Ala-311. Ala-239 and Ala-311 together coordinate ATP. ADP-binding residues include Ala-311 and Asn-335. 2 residues coordinate CDP: Gly-336 and Phe-341. Positions 341, 342, 374, and 375 each coordinate ADP. Position 342 (Glu-342) interacts with AMP. ATP is bound by residues Glu-342, Asp-374, and Thr-375. A Mg(2+)-binding site is contributed by Asp-374.

This sequence belongs to the phosphoglycerate kinase family. Monomer. Requires Mg(2+) as cofactor.

It is found in the cytoplasm. The enzyme catalyses (2R)-3-phosphoglycerate + ATP = (2R)-3-phospho-glyceroyl phosphate + ADP. The protein operates within carbohydrate degradation; glycolysis; pyruvate from D-glyceraldehyde 3-phosphate: step 2/5. This chain is Phosphoglycerate kinase, cytosolic (PGKB), found in Leishmania mexicana.